The primary structure comprises 644 residues: Methionine--tRNA ligase (644 aa).

Positions 14-24 (YYPSAKLHIGN) match the 'HIGH' region motif. Positions 129, 132, 146, and 149 each coordinate Zn(2+). The 'KMSKS' region signature appears at 299 to 303 (KMSKS). Lysine 302 serves as a coordination point for ATP. The tRNA-binding domain maps to 542–644 (DVDKLDLRVV…EDIPTGSIVR (103 aa)).

The protein belongs to the class-I aminoacyl-tRNA synthetase family. MetG type 2A subfamily. In terms of assembly, homodimer. Zn(2+) is required as a cofactor.

It is found in the cytoplasm. The enzyme catalyses tRNA(Met) + L-methionine + ATP = L-methionyl-tRNA(Met) + AMP + diphosphate. Functionally, is required not only for elongation of protein synthesis but also for the initiation of all mRNA translation through initiator tRNA(fMet) aminoacylation. In Clostridium acetobutylicum (strain ATCC 824 / DSM 792 / JCM 1419 / IAM 19013 / LMG 5710 / NBRC 13948 / NRRL B-527 / VKM B-1787 / 2291 / W), this protein is Methionine--tRNA ligase (metG).